The primary structure comprises 83 residues: Three-finger toxin W-IV (83 aa).

The signal sequence occupies residues 1–21 (MKTLLLTLVVVTIVCLDLGHT). Disulfide bonds link Cys24–Cys45, Cys38–Cys62, Cys64–Cys75, and Cys76–Cys81.

Belongs to the three-finger toxin family. Short-chain subfamily. Type I alpha-neurotoxin sub-subfamily. In terms of tissue distribution, expressed by the venom gland.

The protein resides in the secreted. Its function is as follows. Binds to muscle nicotinic acetylcholine receptor (nAChR) and inhibit acetylcholine from binding to the receptor, thereby impairing neuromuscular transmission. The protein is Three-finger toxin W-IV of Walterinnesia aegyptia (Desert black snake).